Here is a 270-residue protein sequence, read N- to C-terminus: Homeobox protein Hox-D12 (270 aa).

Residues 102–122 (APEAAAGPEERGRTRPSFAPE) form a disordered region. Residues 202-261 (ARKKRKPYTKQQIAELENEFLVNEFINRQKRKELSNRLNLSDQQVKIWFQNRRMKKKRVV) constitute a DNA-binding region (homeobox).

The protein belongs to the Abd-B homeobox family.

It localises to the nucleus. Its function is as follows. Sequence-specific transcription factor which is part of a developmental regulatory system that provides cells with specific positional identities on the anterior-posterior axis. This chain is Homeobox protein Hox-D12 (HOXD12), found in Homo sapiens (Human).